A 720-amino-acid polypeptide reads, in one-letter code: Dedicator of cytokinesis protein 9 (720 aa).

Residues 186-638 enclose the DOCKER domain; that stretch reads KSYASTPELR…LSDIIVPRIC (453 aa). Positions 277-638 are interaction with CDC42; that stretch reads DEEASMMEDV…LSDIIVPRIC (362 aa).

The protein belongs to the DOCK family. In terms of assembly, homodimer. Interacts preferentially with nucleotide-depleted CDC42.

It is found in the endomembrane system. Its function is as follows. Guanine nucleotide-exchange factor (GEF) that activates CDC42 by exchanging bound GDP for free GTP. Overexpression induces filopodia formation. The chain is Dedicator of cytokinesis protein 9 (Dock9) from Rattus norvegicus (Rat).